The sequence spans 245 residues: Orotidine 5'-phosphate decarboxylase (245 aa).

Substrate-binding positions include aspartate 22, lysine 44, aspartate 71–threonine 80, threonine 131, arginine 192, glutamine 201, glycine 221, and arginine 222. Residue lysine 73 is the Proton donor of the active site.

The protein belongs to the OMP decarboxylase family. Type 1 subfamily. In terms of assembly, homodimer.

It carries out the reaction orotidine 5'-phosphate + H(+) = UMP + CO2. Its pathway is pyrimidine metabolism; UMP biosynthesis via de novo pathway; UMP from orotate: step 2/2. Its function is as follows. Catalyzes the decarboxylation of orotidine 5'-monophosphate (OMP) to uridine 5'-monophosphate (UMP). The sequence is that of Orotidine 5'-phosphate decarboxylase from Escherichia coli O81 (strain ED1a).